The chain runs to 811 residues: MPSYQYLLSLLFYILDCTDRFSVIVTIHNHRVGVLMIVLLQDQWKSYCRTISLLAFQSFGVVYGDLSTSPLYVYKSAFSGRLNNYRDETTIFGLFSLIFWTLTLLPLLKYVIIVLNADDNGEGGTFALYSLLCRHAKFSLLPNQQSADEELSTYYQPGVGGIISSPLKRFLEKHRKLRTCLLLFVLFGACMVIGDGVFTPAISVLSAISGLKDPGPGGIPDGWVVFIACIVLVGLFALQHRGTHRVAFMFAPIVVVWLLSIGVIGLYNIIHWNHRIFLALSPHYVIKFFKMTGKDGWLSLGGVLLAITGTEAMFADLGHFTAASIRLAFVGAIYPCLVLQYMGQAAFLSRNMSAVEDSFYQSVPRSLFWPVFVIATLAAVVGSQSIISATFSIVKQCLSLGCFPRVKVVHTSRWIHGQIYIPEINWILMVLCLAVTLGFRDTTVIGNAYGLACIVVMFVTTWLMALVIIFVWQKNILLALLFVVAFGSIEVVYLSAAVTKVPQGGWAPIVFAFVFMLVMYVWHYGSRRKYLFDLQNKVSMKWILTLGPSLGIVRVPGIGLIYTELVTGVPSIFSHFVTNLPAFHQVLVFVCVKSVPVPFVPEDERYLIGRIGPREYRMYRCIVRYGYKDVQKDDENFENHLVMSIAKFIQMEAEEAASSGSYESSEGRMAVIHTEDTTGTGLVMRDSNNEASGTSLTRSSRSETLRSLQSIYEQESGSLSRRRRVRFEIAEEERIDPQVRDELADLLDAKEAGVTYIIGHSYVKARKNSNFLKTFAIDYAYSFLRKNCRGPAVALHIPHISLVEVGMIYYV.

Over 1-52 the chain is Cytoplasmic; the sequence is MPSYQYLLSLLFYILDCTDRFSVIVTIHNHRVGVLMIVLLQDQWKSYCRTIS. A helical transmembrane segment spans residues 53-73; the sequence is LLAFQSFGVVYGDLSTSPLYV. Residues 74-93 lie on the Extracellular side of the membrane; sequence YKSAFSGRLNNYRDETTIFG. Residues 94-114 form a helical membrane-spanning segment; it reads LFSLIFWTLTLLPLLKYVIIV. Over 115–181 the chain is Cytoplasmic; that stretch reads LNADDNGEGG…EKHRKLRTCL (67 aa). The helical transmembrane segment at 182 to 202 threads the bilayer; that stretch reads LLFVLFGACMVIGDGVFTPAI. Residues 203–217 are Extracellular-facing; it reads SVLSAISGLKDPGPG. The helical transmembrane segment at 218–238 threads the bilayer; it reads GIPDGWVVFIACIVLVGLFAL. Topologically, residues 239-245 are cytoplasmic; that stretch reads QHRGTHR. Residues 246–266 form a helical membrane-spanning segment; that stretch reads VAFMFAPIVVVWLLSIGVIGL. Residues 267-296 are Extracellular-facing; the sequence is YNIIHWNHRIFLALSPHYVIKFFKMTGKDG. The helical transmembrane segment at 297-317 threads the bilayer; the sequence is WLSLGGVLLAITGTEAMFADL. At 318 to 326 the chain is on the cytoplasmic side; sequence GHFTAASIR. A helical membrane pass occupies residues 327 to 347; sequence LAFVGAIYPCLVLQYMGQAAF. At 348-366 the chain is on the extracellular side; it reads LSRNMSAVEDSFYQSVPRS. The N-linked (GlcNAc...) asparagine glycan is linked to Asn351. Residues 367-387 traverse the membrane as a helical segment; sequence LFWPVFVIATLAAVVGSQSII. Residues 388–418 are Cytoplasmic-facing; that stretch reads SATFSIVKQCLSLGCFPRVKVVHTSRWIHGQ. A helical membrane pass occupies residues 419–439; that stretch reads IYIPEINWILMVLCLAVTLGF. Residues 440-450 lie on the Extracellular side of the membrane; the sequence is RDTTVIGNAYG. Residues 451-471 traverse the membrane as a helical segment; that stretch reads LACIVVMFVTTWLMALVIIFV. Topologically, residues 472 to 475 are cytoplasmic; sequence WQKN. A helical membrane pass occupies residues 476–496; sequence ILLALLFVVAFGSIEVVYLSA. The Extracellular segment spans residues 497-503; it reads AVTKVPQ. A helical transmembrane segment spans residues 504–524; the sequence is GGWAPIVFAFVFMLVMYVWHY. At 525–811 the chain is on the cytoplasmic side; it reads GSRRKYLFDL…LVEVGMIYYV (287 aa). A disordered region spans residues 680–702; sequence TGLVMRDSNNEASGTSLTRSSRS.

It belongs to the HAK/KUP transporter (TC 2.A.72.3) family. In terms of tissue distribution, expressed in roots and shoots.

The protein localises to the membrane. Its function is as follows. High-affinity potassium transporter. In Oryza sativa subsp. japonica (Rice), this protein is Potassium transporter 7 (HAK7).